Consider the following 380-residue polypeptide: uncharacterized protein (380 aa).

Positions Met-1–Ala-28 are cleaved as a signal peptide. One can recognise an SPOR domain in the interval Ala-307–Phe-380.

This is an uncharacterized protein from Treponema pallidum (strain Nichols).